The following is a 64-amino-acid chain: Temporin-ALd (64 aa).

The signal sequence occupies residues 1–22; it reads MFTMKKSLLLLFFLGTIHLSLC. Residues 23-46 constitute a propeptide that is removed on maturation; it reads EQERNAEEERRDDLGERQAEVEKR. Residue Leu62 is modified to Leucine amide.

In terms of tissue distribution, expressed by the skin glands.

It is found in the secreted. In terms of biological role, antimicrobial peptide with activity against Gram-positive and Gram-negative bacteria and against fungi. Has been tested against S.aureus (MIC=1.25 ug/mL), B.pumilus (MIC=2.5 ug/mL), B.cereus (MIC=15.0 ug/mL), E.coli (MIC=1.25 ug/mL), B.dysenteriae (MIC=5.0 ug/mL), A.cacoaceticus (MIC=15.0 ug/mL), P.aeruginosa (MIC=5.0 ug/mL) and C.albicans (MIC=1.25 ug/mL). Also shows a weak hemolytic activity. The polypeptide is Temporin-ALd (Amolops loloensis (Lolokou Sucker Frog)).